The following is a 740-amino-acid chain: MYVVHVEMSPEAIATQKPYLDLGLTEAEYDRFAELIGHQPNDTEIGLASGMWSEHCAYKYSKPVLRQFWTKNERVLMGPGEGAGVIDIGEGKAVVFKAESHNHPSAVEPYEGAATGVGGIIRDIFSIGAKPVAMLDSLAFGDIEQPHTQHLVDRIVAGIGGYGNAIGIPTVGGETNFDGSYTRNPLVNAMCVGIMDKDQIQKGKAAGVGNALIYVGAKTGRDGINGASFASGDFSDEEAADRSAVQVGDPFMEKLLMDACLEITGHHQEALVGIQDMGAAGLVSSSVEMAGKANSGMVLDLDLIPQREAEMTPFEIMLSESQERMLLCVRAGFEQEVLAVFADYDLDAAIVGHVIAGHQYQLYHHGKLVCDVPVSSLTDDAPIYHQQGKMPKRLAQPAADFDPIITDPVQIWTDMMAMPTIADKSSLYKRYDAQVQTNTVVLPGSDAAVIRIRGTHRALAMTTDSKDVTCILIAGGCGNECWLKRARNLVASGAEPLGITDCLNFGDPTKPEAFYELAEAAKGIIAATKAFNAPVISGNVSLYNETNGEAIYPTPMIGMVGLIEDLSTITTAAFKQADDLIYLVGETHGDFNGSELQKLQTGEVTGKLFDFDLEAEKQHQHFVLKAIREHLITAAHDLSDGGLLVALAEMGFDAQLGAQINVTLPTAWGFSETQGRFLLTVSPENQAAFEALHGPAQLIGRVQAPPEFEVTTVNQHFSASLQQLQTAFEEALPCHMNQKA.

The active site involves H55. The ATP site is built by Y58 and K97. E99 serves as a coordination point for Mg(2+). Substrate contacts are provided by residues 100–103 and R122; that span reads SHNH. The active-site Proton acceptor is the H101. D123 contacts Mg(2+). Q246 is a binding site for substrate. D276 provides a ligand contact to Mg(2+). Residue 320–322 participates in substrate binding; sequence ESQ. ATP contacts are provided by D501 and G538. N539 is a binding site for Mg(2+). Residue S541 coordinates substrate.

The protein belongs to the FGAMS family. In terms of assembly, monomer. Part of the FGAM synthase complex composed of 1 PurL, 1 PurQ and 2 PurS subunits.

It localises to the cytoplasm. The enzyme catalyses N(2)-formyl-N(1)-(5-phospho-beta-D-ribosyl)glycinamide + L-glutamine + ATP + H2O = 2-formamido-N(1)-(5-O-phospho-beta-D-ribosyl)acetamidine + L-glutamate + ADP + phosphate + H(+). The protein operates within purine metabolism; IMP biosynthesis via de novo pathway; 5-amino-1-(5-phospho-D-ribosyl)imidazole from N(2)-formyl-N(1)-(5-phospho-D-ribosyl)glycinamide: step 1/2. Functionally, part of the phosphoribosylformylglycinamidine synthase complex involved in the purines biosynthetic pathway. Catalyzes the ATP-dependent conversion of formylglycinamide ribonucleotide (FGAR) and glutamine to yield formylglycinamidine ribonucleotide (FGAM) and glutamate. The FGAM synthase complex is composed of three subunits. PurQ produces an ammonia molecule by converting glutamine to glutamate. PurL transfers the ammonia molecule to FGAR to form FGAM in an ATP-dependent manner. PurS interacts with PurQ and PurL and is thought to assist in the transfer of the ammonia molecule from PurQ to PurL. The polypeptide is Phosphoribosylformylglycinamidine synthase subunit PurL (Lacticaseibacillus casei (Lactobacillus casei)).